Reading from the N-terminus, the 155-residue chain is Large ribosomal subunit protein eL24 (155 aa).

Residues 93–123 (KRNARPETRNATRAKHAEAAKERKEKEAERR) are compositionally biased toward basic and acidic residues. Residues 93–155 (KRNARPETRN…SAPKVQATSR (63 aa)) are disordered.

It belongs to the eukaryotic ribosomal protein eL24 family.

The polypeptide is Large ribosomal subunit protein eL24 (RPL24) (Yarrowia lipolytica (strain CLIB 122 / E 150) (Yeast)).